A 173-amino-acid polypeptide reads, in one-letter code: NADH-ubiquinone oxidoreductase chain 6 (173 aa).

Helical transmembrane passes span 1-21 (MTYFVIFLGICFMLGVLAVAS), 27-47 (YGVVGLVVASVMGCGWLVSLG), 48-68 (VSFVSLALFLVYLGGMLVVFV), 87-107 (VVGYGLGFVLVVWMGVVLGGL), and 139-159 (CGVGLFLVAGWGLLLALFVVL).

The protein belongs to the complex I subunit 6 family. In terms of assembly, core subunit of respiratory chain NADH dehydrogenase (Complex I) which is composed of 45 different subunits.

It is found in the mitochondrion inner membrane. It catalyses the reaction a ubiquinone + NADH + 5 H(+)(in) = a ubiquinol + NAD(+) + 4 H(+)(out). In terms of biological role, core subunit of the mitochondrial membrane respiratory chain NADH dehydrogenase (Complex I) which catalyzes electron transfer from NADH through the respiratory chain, using ubiquinone as an electron acceptor. Essential for the catalytic activity and assembly of complex I. The sequence is that of NADH-ubiquinone oxidoreductase chain 6 (MT-ND6) from Gallus gallus (Chicken).